Here is a 512-residue protein sequence, read N- to C-terminus: NAD(P)H-quinone oxidoreductase subunit 2, organellar chromatophore (512 aa).

Helical transmembrane passes span 6-26 (LLALPLNAATIVPEGAILLAL), 43-63 (WVPPICYAGLGSALILLASQW), 80-100 (LAIAFRAIIATSTLFSLMISW), 107-127 (GAPMGEYAAILLAATLGAMFL), 133-153 (LVSIFVSLETLSVSSYLLAGY), 168-188 (LLVGSATAAVFLYGASLLYGL), 210-230 (AALALVFVLATVAFKIAAVPF), 242-262 (PTPIVAFLSVGSKTAGFALAL), 276-296 (WKFLFSLLAILSMVLGNIVAL), 304-324 (MLAYSSIGQAGFVMIGLVCGT), 332-352 (ILYLATYLFMNMGAFACVILF), 376-396 (IGLSLCLLSLGGIPPMLGFFG), 411-431 (LLVVTGLITSVVSIYYYISVI), and 464-484 (VALLVCVIVTGIGGIFSNPLF).

This sequence belongs to the complex I subunit 2 family. In terms of assembly, NDH-1 can be composed of about 15 different subunits; different subcomplexes with different compositions have been identified which probably have different functions.

The protein localises to the plastid. It is found in the organellar chromatophore thylakoid membrane. The catalysed reaction is a plastoquinone + NADH + (n+1) H(+)(in) = a plastoquinol + NAD(+) + n H(+)(out). It catalyses the reaction a plastoquinone + NADPH + (n+1) H(+)(in) = a plastoquinol + NADP(+) + n H(+)(out). Functionally, NDH-1 shuttles electrons from an unknown electron donor, via FMN and iron-sulfur (Fe-S) centers, to quinones in the respiratory and/or the photosynthetic chain. The immediate electron acceptor for the enzyme in this species is believed to be plastoquinone. Couples the redox reaction to proton translocation, and thus conserves the redox energy in a proton gradient. Cyanobacterial NDH-1 also plays a role in inorganic carbon-concentration. This chain is NAD(P)H-quinone oxidoreductase subunit 2, organellar chromatophore, found in Paulinella chromatophora.